A 449-amino-acid polypeptide reads, in one-letter code: Wilms tumor protein (449 aa).

Residues tyrosine 48 to histidine 84 are disordered. Residues proline 54–histidine 69 show a composition bias toward pro residues. Residues lysine 73 and lysine 177 each participate in a glycyl lysine isopeptide (Lys-Gly) (interchain with G-Cter in SUMO) cross-link. Positions methionine 236–glycine 244 match the 9aaTAD motif. C2H2-type zinc fingers lie at residues phenylalanine 323–histidine 347, tyrosine 353–histidine 377, and phenylalanine 383–histidine 405. Important for interaction with target DNA regions lie at residues serine 367–lysine 381 and serine 393–histidine 401. A KTS motif motif is present at residues lysine 408–serine 410. A C2H2-type 4 zinc finger spans residues phenylalanine 414–histidine 438. Lysine 444 participates in a covalent cross-link: Glycyl lysine isopeptide (Lys-Gly) (interchain with G-Cter in SUMO2).

The protein belongs to the EGR C2H2-type zinc-finger protein family. Homodimer. Interacts with WTIP. Interacts with actively translating polysomes. Detected in nuclear ribonucleoprotein (mRNP) particles. Interacts with HNRNPU via the zinc-finger region. Interacts with U2AF2. Interacts with CITED2. Interacts with ZNF224 via the zinc-finger region. Interacts with WTAP and SRY. Interacts with AMER1. Interacts with RBM4. As to expression, expressed in the kidney and a subset of hematopoietic cells.

The protein localises to the nucleus. It localises to the nucleolus. It is found in the cytoplasm. The protein resides in the nucleus speckle. Its subcellular location is the nucleoplasm. Transcription factor that plays an important role in cellular development and cell survival. Recognizes and binds to the DNA sequence 5'-GCG(T/G)GGGCG-3'. Regulates the expression of numerous target genes, including EPO. Plays an essential role for development of the urogenital system. It has a tumor suppressor as well as an oncogenic role in tumor formation. Function may be isoform-specific: isoforms lacking the KTS motif may act as transcription factors. Isoforms containing the KTS motif may bind mRNA and play a role in mRNA metabolism or splicing. Isoform 1 has lower affinity for DNA, and can bind RNA. This is Wilms tumor protein (WT1) from Homo sapiens (Human).